The sequence spans 307 residues: Nucleotide-binding protein Acid345_3782 (307 aa).

31 to 38 contacts ATP; the sequence is GLSGSGKA. 81-84 serves as a coordination point for GTP; the sequence is DIRE.

This sequence belongs to the RapZ-like family.

Its function is as follows. Displays ATPase and GTPase activities. The sequence is that of Nucleotide-binding protein Acid345_3782 from Koribacter versatilis (strain Ellin345).